The sequence spans 906 residues: Translation initiation factor IF-2 (906 aa).

Disordered regions lie at residues 134–250 and 269–317; these read RQRN…GSHV and HLSA…FERP. Over residues 136 to 177 the composition is skewed to basic and acidic residues; that stretch reads RNLDEQQRLAESDRVRDEEIQRKRDEEQAAKDRAEAERKAAE. 2 stretches are compositionally biased toward low complexity: residues 178–232 and 287–305; these read EAAA…STPA and GRPG…RGSN. In terms of domain architecture, tr-type G spans 405 to 574; the sequence is TRPPVVTIMG…SLQAEVLELK (170 aa). A G1 region spans residues 414–421; the sequence is GHVDHGKT. 414–421 contributes to the GTP binding site; sequence GHVDHGKT. Residues 439–443 are G2; the sequence is GITQH. A G3 region spans residues 460–463; that stretch reads DTPG. GTP contacts are provided by residues 460–464 and 514–517; these read DTPGH and NKID. The G4 stretch occupies residues 514 to 517; the sequence is NKID. The G5 stretch occupies residues 550 to 552; that stretch reads SAK.

It belongs to the TRAFAC class translation factor GTPase superfamily. Classic translation factor GTPase family. IF-2 subfamily.

Its subcellular location is the cytoplasm. Its function is as follows. One of the essential components for the initiation of protein synthesis. Protects formylmethionyl-tRNA from spontaneous hydrolysis and promotes its binding to the 30S ribosomal subunits. Also involved in the hydrolysis of GTP during the formation of the 70S ribosomal complex. The sequence is that of Translation initiation factor IF-2 from Xanthomonas oryzae pv. oryzae (strain MAFF 311018).